Here is a 116-residue protein sequence, read N- to C-terminus: Mercuric transport protein MerT (116 aa).

2 helical membrane-spanning segments follow: residues 16–36 and 46–66; these read LAAILASACCLGPLVLIALGF and VLEPYRPIFIGAALVALFFAW. Residues Cys24 and Cys25 each contribute to the Hg(2+) site. Residues Cys76 and Cys82 each coordinate Hg(2+). Residues 94 to 114 traverse the membrane as a helical segment; sequence IFWVVAALVLVALGFPYVMPF.

It belongs to the MerT family.

Its subcellular location is the cell inner membrane. In terms of biological role, involved in mercury resistance. Probably transfers a mercuric ion from the periplasmic Hg(2+)-binding protein MerP to the cytoplasmic mercuric reductase MerA. The polypeptide is Mercuric transport protein MerT (Serratia marcescens).